A 156-amino-acid chain; its full sequence is Arginine repressor (156 aa).

The protein belongs to the ArgR family.

It localises to the cytoplasm. The protein operates within amino-acid biosynthesis; L-arginine biosynthesis [regulation]. Its function is as follows. Regulates arginine biosynthesis genes. The protein is Arginine repressor of Shewanella piezotolerans (strain WP3 / JCM 13877).